The following is a 294-amino-acid chain: Small ribosomal subunit protein uS2 (294 aa).

The tract at residues 232–294 (RATGTTEAPE…SAAGEADAAK (63 aa)) is disordered. Residues 246–259 (EWERELLEGSKSEE) show a composition bias toward basic and acidic residues. Low complexity predominate over residues 260 to 294 (AAAPAAAEEAPAAAEEAPAAAEATESAAGEADAAK).

This sequence belongs to the universal ribosomal protein uS2 family.

In Arthrobacter sp. (strain FB24), this protein is Small ribosomal subunit protein uS2.